A 1154-amino-acid chain; its full sequence is DNA-directed RNA polymerase, mitochondrial (1154 aa).

Residues 1–30 (MLRRKIQTYLSRSHIRRGLCGLRFFQTQRL) constitute a mitochondrion transit peptide. The disordered stretch occupies residues 221 to 243 (ESENGKDQNGDSSLKEKQPDVET). The span at 223–240 (ENGKDQNGDSSLKEKQPD) shows a compositional bias: basic and acidic residues. Residues D821, K890, and D1061 contribute to the active site.

It belongs to the phage and mitochondrial RNA polymerase family.

The protein localises to the mitochondrion. It catalyses the reaction RNA(n) + a ribonucleoside 5'-triphosphate = RNA(n+1) + diphosphate. In terms of biological role, DNA-dependent RNA polymerase catalyzes the transcription of DNA into RNA using the four ribonucleoside triphosphates as substrates. Combines in the mitochondrion with mitochondrial transcription factor mtf1 as a holoenzyme to recognize and initiate transcription at the core mitochondrial promoters. This is DNA-directed RNA polymerase, mitochondrial (rpo41) from Schizosaccharomyces pombe (strain 972 / ATCC 24843) (Fission yeast).